The chain runs to 387 residues: Diels-Alderase ORF3 (387 aa).

The protein belongs to the Diels-Alderase family.

The protein operates within secondary metabolite biosynthesis. In terms of biological role, diels-Alderase; part of the gene cluster that mediates the biosynthesis of a tyrosine-derived cytochalasan acting as a fungal signal recognized by resistant rice plants and leads to avirulence in Pi33 resistant rice cultivars. The first step in the pathway is catalyzed by the hybrid PKS-NRPS ACE1, assisted by the enoyl reductase RAP1, that are responsible for fusion of the tyrosine precursor and the polyketide backbone. The polyketide synthase module (PKS) of ACE1 is responsible for the synthesis of the polyketide backbone and the downstream nonribosomal peptide synthetase (NRPS) amidates the carboxyl end of the polyketide with the tyrosine precursor. Because ACE1 lacks a designated enoylreductase (ER) domain, the required activity is provided the enoyl reductase RAP1. Reduction by the hydrolyase ORFZ, followed by dehydration and intra-molecular Diels-Alder cyclization by the Diels-Alderase ORF3 then yield the required isoindolone-fused macrocycle. A number of oxidative steps catalyzed by the tailoring enzymes identified within the cluster, including cytochrome P450 monooxygenases CYP1 to CYP4, the FAD-linked oxidoreductase OXR2 and the short-chain dehydrogenase/reductase OXR1, are further required to afford the final cytochalasans that confer avirulence and which have still to be identified. The monooxygenase CYP1 has been shown to be a site-selective C-18 hydroxylase whereas the function of CYP3 is the site-selective epoxidation of the C-6/C-7 olefin that is present in some intermediate compounds. Finally, SYN2 and RAP2 are not required for avirulence in Pi33 resistant rice cultivars. The chain is Diels-Alderase ORF3 from Pyricularia oryzae (strain 70-15 / ATCC MYA-4617 / FGSC 8958) (Rice blast fungus).